The following is a 69-amino-acid chain: Conotoxin LvVID (69 aa).

The first 17 residues, 1-17 (VLIIAVLFLTACQLTTA), serve as a signal peptide directing secretion. The propeptide occupies 18–40 (ETYPRGQQRHHALRSTDKNSKLT). Intrachain disulfides connect C43–C57, C50–C61, and C56–C68.

Belongs to the conotoxin O1 superfamily. Expressed by the venom duct.

The protein resides in the secreted. The polypeptide is Conotoxin LvVID (Conus lividus (Livid cone)).